The primary structure comprises 132 residues: uncharacterized protein (132 aa).

WD repeat units lie at residues 14–53 and 58–97; these read DLQD…LEIL and AHDD…LANV.

This is an uncharacterized protein from Acanthamoeba polyphaga (Amoeba).